We begin with the raw amino-acid sequence, 479 residues long: Cardiolipin synthase (479 aa).

The next 2 membrane-spanning stretches (helical) occupy residues 5 to 25 (SLLL…IIFL) and 34 to 54 (WAWV…YLIF). PLD phosphodiesterase domains follow at residues 216–243 (INYR…GDEY) and 392–419 (QNGF…DVRS). Catalysis depends on residues His-221, Lys-223, Asp-228, His-397, Lys-399, and Asp-404.

This sequence belongs to the phospholipase D family. Cardiolipin synthase subfamily.

It is found in the cell membrane. The enzyme catalyses 2 a 1,2-diacyl-sn-glycero-3-phospho-(1'-sn-glycerol) = a cardiolipin + glycerol. In terms of biological role, catalyzes the reversible phosphatidyl group transfer from one phosphatidylglycerol molecule to another to form cardiolipin (CL) (diphosphatidylglycerol) and glycerol. This Oceanobacillus iheyensis (strain DSM 14371 / CIP 107618 / JCM 11309 / KCTC 3954 / HTE831) protein is Cardiolipin synthase (cls).